Here is a 162-residue protein sequence, read N- to C-terminus: Peptide deformylase-like (162 aa).

It belongs to the polypeptide deformylase family.

This Staphylococcus aureus (strain MRSA252) protein is Peptide deformylase-like.